Here is a 254-residue protein sequence, read N- to C-terminus: Ubiquinone/menaquinone biosynthesis C-methyltransferase UbiE (254 aa).

S-adenosyl-L-methionine contacts are provided by residues Thr77, Asp98, 126 to 127, and Ser143; that span reads DA.

It belongs to the class I-like SAM-binding methyltransferase superfamily. MenG/UbiE family.

It catalyses the reaction a 2-demethylmenaquinol + S-adenosyl-L-methionine = a menaquinol + S-adenosyl-L-homocysteine + H(+). The enzyme catalyses a 2-methoxy-6-(all-trans-polyprenyl)benzene-1,4-diol + S-adenosyl-L-methionine = a 5-methoxy-2-methyl-3-(all-trans-polyprenyl)benzene-1,4-diol + S-adenosyl-L-homocysteine + H(+). It participates in quinol/quinone metabolism; menaquinone biosynthesis; menaquinol from 1,4-dihydroxy-2-naphthoate: step 2/2. The protein operates within cofactor biosynthesis; ubiquinone biosynthesis. Functionally, methyltransferase required for the conversion of demethylmenaquinol (DMKH2) to menaquinol (MKH2) and the conversion of 2-polyprenyl-6-methoxy-1,4-benzoquinol (DDMQH2) to 2-polyprenyl-3-methyl-6-methoxy-1,4-benzoquinol (DMQH2). The chain is Ubiquinone/menaquinone biosynthesis C-methyltransferase UbiE from Blochmanniella pennsylvanica (strain BPEN).